We begin with the raw amino-acid sequence, 428 residues long: Serine--tRNA ligase (428 aa).

Residue 231–233 (TSE) coordinates L-serine. Residues 262–264 (RRE) and Val-278 each bind ATP. Glu-285 lines the L-serine pocket. 349-352 (ELTS) serves as a coordination point for ATP. Residue Thr-384 participates in L-serine binding.

The protein belongs to the class-II aminoacyl-tRNA synthetase family. Type-1 seryl-tRNA synthetase subfamily. As to quaternary structure, homodimer. The tRNA molecule binds across the dimer.

The protein localises to the cytoplasm. It carries out the reaction tRNA(Ser) + L-serine + ATP = L-seryl-tRNA(Ser) + AMP + diphosphate + H(+). It catalyses the reaction tRNA(Sec) + L-serine + ATP = L-seryl-tRNA(Sec) + AMP + diphosphate + H(+). The protein operates within aminoacyl-tRNA biosynthesis; selenocysteinyl-tRNA(Sec) biosynthesis; L-seryl-tRNA(Sec) from L-serine and tRNA(Sec): step 1/1. Catalyzes the attachment of serine to tRNA(Ser). Is also able to aminoacylate tRNA(Sec) with serine, to form the misacylated tRNA L-seryl-tRNA(Sec), which will be further converted into selenocysteinyl-tRNA(Sec). This is Serine--tRNA ligase from Bifidobacterium longum (strain NCC 2705).